Here is a 483-residue protein sequence, read N- to C-terminus: Endoplasmic reticulum lectin 1 (483 aa).

The N-terminal stretch at Met-1 to Ala-33 is a signal peptide. MRH domains are found at residues Ser-111–His-246 and Ser-342–Ile-469. Cys-113 and Cys-126 are disulfide-bonded. An N-linked (GlcNAc...) asparagine glycan is attached at Asn-195. 5 disulfides stabilise this stretch: Cys-199/Cys-232, Cys-215/Cys-244, Cys-344/Cys-357, Cys-421/Cys-455, and Cys-436/Cys-467.

May form a complex with OS9, HSPA5, SYVN1, and SEL1L with which it interacts directly. Interacts (via PRKCSH 2 domain) with KREMEN2 (when glycosylated). Interacts with HSPA5. Post-translationally, isoform 1 and isoform 2 are N-glycosylated.

It localises to the endoplasmic reticulum lumen. Its function is as follows. Probable lectin that binds selectively to improperly folded lumenal proteins. May function in endoplasmic reticulum quality control and endoplasmic reticulum-associated degradation (ERAD) of both non-glycosylated proteins and glycoproteins. The sequence is that of Endoplasmic reticulum lectin 1 (ERLEC1) from Homo sapiens (Human).